The sequence spans 342 residues: Probable dual-specificity RNA methyltransferase RlmN (342 aa).

Glu-91 serves as the catalytic Proton acceptor. In terms of domain architecture, Radical SAM core spans Tyr-97–Glu-327. A disulfide bond links Cys-104 and Cys-332. 3 residues coordinate [4Fe-4S] cluster: Cys-111, Cys-115, and Cys-118. Residues Gly-158 to Glu-159, Ser-190, Ser-213 to His-215, and Asn-289 each bind S-adenosyl-L-methionine. Cys-332 (S-methylcysteine intermediate) is an active-site residue.

This sequence belongs to the radical SAM superfamily. RlmN family. The cofactor is [4Fe-4S] cluster.

The protein localises to the cytoplasm. It catalyses the reaction adenosine(2503) in 23S rRNA + 2 reduced [2Fe-2S]-[ferredoxin] + 2 S-adenosyl-L-methionine = 2-methyladenosine(2503) in 23S rRNA + 5'-deoxyadenosine + L-methionine + 2 oxidized [2Fe-2S]-[ferredoxin] + S-adenosyl-L-homocysteine. It carries out the reaction adenosine(37) in tRNA + 2 reduced [2Fe-2S]-[ferredoxin] + 2 S-adenosyl-L-methionine = 2-methyladenosine(37) in tRNA + 5'-deoxyadenosine + L-methionine + 2 oxidized [2Fe-2S]-[ferredoxin] + S-adenosyl-L-homocysteine. Specifically methylates position 2 of adenine 2503 in 23S rRNA and position 2 of adenine 37 in tRNAs. The chain is Probable dual-specificity RNA methyltransferase RlmN from Carboxydothermus hydrogenoformans (strain ATCC BAA-161 / DSM 6008 / Z-2901).